Reading from the N-terminus, the 247-residue chain is 3-deoxy-manno-octulosonate cytidylyltransferase (247 aa).

It belongs to the KdsB family.

It localises to the cytoplasm. It carries out the reaction 3-deoxy-alpha-D-manno-oct-2-ulosonate + CTP = CMP-3-deoxy-beta-D-manno-octulosonate + diphosphate. It functions in the pathway nucleotide-sugar biosynthesis; CMP-3-deoxy-D-manno-octulosonate biosynthesis; CMP-3-deoxy-D-manno-octulosonate from 3-deoxy-D-manno-octulosonate and CTP: step 1/1. The protein operates within bacterial outer membrane biogenesis; lipopolysaccharide biosynthesis. In terms of biological role, activates KDO (a required 8-carbon sugar) for incorporation into bacterial lipopolysaccharide in Gram-negative bacteria. This is 3-deoxy-manno-octulosonate cytidylyltransferase from Chlorobium phaeovibrioides (strain DSM 265 / 1930) (Prosthecochloris vibrioformis (strain DSM 265)).